Reading from the N-terminus, the 524-residue chain is Butyrophilin subfamily 1 member A1 (524 aa).

The N-terminal stretch at 1-26 (MAVPTNSCLLVCLLTLTVLQLPTLDS) is a signal peptide. Topologically, residues 27 to 247 (AAPFDVTAPQ…APFVPRLTPW (221 aa)) are extracellular. Ig-like V-type domains are found at residues 29–141 (PFDV…VYLK) and 149–235 (PQIS…VEIS). Disulfide bonds link C51/C125 and C165/C219. 2 N-linked (GlcNAc...) asparagine glycosylation sites follow: N56 and N216. Residues 248–268 (IVAVAIILLALGFLTIGSIFF) form a helical membrane-spanning segment. Over 269-524 (TWKLYKERSS…IPFSPSQAAP (256 aa)) the chain is Cytoplasmic. Positions 286–480 (SKERLLEELR…LTICSTANGP (195 aa)) constitute a B30.2/SPRY domain.

The protein belongs to the immunoglobulin superfamily. BTN/MOG family. As to quaternary structure, seems to associate with xanthine dehydrogenase/oxidase. N-glycosylated. As to expression, strongly expressed in lactating mammary tissue (at protein level). About 100-fold lower levels in virgin mammary tissue. Also detected in spleen and thymus at 10-20 times lower levels compared to those detected in virgin mammary gland. Very low levels in several other tissues, including brain, heart, kidney, lymph node, lung and small intestine. In the thymus, detected in the stroma, in epithelial cells (at protein level). Most prominent in medullary areas of the thymus and at the corticomedullary junction (at protein level).

It localises to the membrane. Its function is as follows. May function in the secretion of milk-fat droplets. May act as a specific membrane-associated receptor for the association of cytoplasmic droplets with the apical plasma membrane. Inhibits the proliferation of CD4 and CD8 T-cells activated by anti-CD3 antibodies, T-cell metabolism and IL2 and IFNG secretion. The chain is Butyrophilin subfamily 1 member A1 (Btn1a1) from Mus musculus (Mouse).